We begin with the raw amino-acid sequence, 325 residues long: tRNA dimethylallyltransferase (325 aa).

16 to 23 contacts ATP; that stretch reads GPTASGKT. 18–23 contacts substrate; sequence TASGKT. Interaction with substrate tRNA stretches follow at residues 41-44, 165-169, 253-258, and 286-293; these read DSAL, QRIQR, RCVGYR, and KRQITWLR.

Belongs to the IPP transferase family. Monomer. It depends on Mg(2+) as a cofactor.

It catalyses the reaction adenosine(37) in tRNA + dimethylallyl diphosphate = N(6)-dimethylallyladenosine(37) in tRNA + diphosphate. In terms of biological role, catalyzes the transfer of a dimethylallyl group onto the adenine at position 37 in tRNAs that read codons beginning with uridine, leading to the formation of N6-(dimethylallyl)adenosine (i(6)A). In Ralstonia pickettii (strain 12J), this protein is tRNA dimethylallyltransferase.